Consider the following 874-residue polypeptide: Alanine--tRNA ligase (874 aa).

Histidine 559, histidine 563, cysteine 661, and histidine 665 together coordinate Zn(2+).

Belongs to the class-II aminoacyl-tRNA synthetase family. Requires Zn(2+) as cofactor.

It localises to the cytoplasm. It catalyses the reaction tRNA(Ala) + L-alanine + ATP = L-alanyl-tRNA(Ala) + AMP + diphosphate. In terms of biological role, catalyzes the attachment of alanine to tRNA(Ala) in a two-step reaction: alanine is first activated by ATP to form Ala-AMP and then transferred to the acceptor end of tRNA(Ala). Also edits incorrectly charged Ser-tRNA(Ala) and Gly-tRNA(Ala) via its editing domain. This Microcystis aeruginosa (strain NIES-843 / IAM M-2473) protein is Alanine--tRNA ligase.